The sequence spans 105 residues: Cuticle protein AMP2 (105 aa).

A disordered region spans residues 1 to 21 (DRDAQTLTDERSDQGDGNFRY). Positions 16–81 (DGNFRYEFET…PSSDLLPVGP (66 aa)) constitute a Chitin-binding type R&amp;R domain.

In terms of tissue distribution, arthrodial membrane.

In Homarus americanus (American lobster), this protein is Cuticle protein AMP2.